Reading from the N-terminus, the 390-residue chain is Multidrug export protein EmrA (390 aa).

The Cytoplasmic portion of the chain corresponds to 1–24 (MSANAETQTPQQPVKKSGKRKRLL). The helical transmembrane segment at 25–45 (LLLTLLFIIIAVAIGIYWFLV) threads the bilayer. Residues 46–390 (LRHFEETDDA…IDDIVKANAG (345 aa)) lie on the Periplasmic side of the membrane. Positions 120–180 (INSKQLQANI…QAQLDVAIQQ (61 aa)) form a coiled coil.

The protein belongs to the membrane fusion protein (MFP) (TC 8.A.1) family. Homodimer and homotrimer. Part of the tripartite efflux system EmrAB-TolC, which is composed of an inner membrane transporter, EmrB, a periplasmic membrane fusion protein, EmrA, and an outer membrane component, TolC. The complex forms a large protein conduit and can translocate molecules across both the inner and outer membranes. Interacts with EmrB. EmrAB complex forms a dimer in vitro.

The protein localises to the cell inner membrane. In terms of biological role, part of the tripartite efflux system EmrAB-TolC, which confers resistance to antibiotics such as CCCP, FCCP, 2,4-dinitrophenol and nalidixic acid. EmrA is a drug-binding protein that provides a physical link between EmrB and TolC. The polypeptide is Multidrug export protein EmrA (emrA) (Escherichia coli (strain K12)).